A 283-amino-acid polypeptide reads, in one-letter code: Aldo-keto reductase Mmcs_1938 (283 aa).

The active-site Proton donor is the Tyr-58. Gly-196, Leu-198, Val-200, Ile-236, Arg-238, Ser-239, Ala-240, Arg-244, Ser-247, Asn-248, and Arg-274 together coordinate NADPH.

Belongs to the aldo/keto reductase family.

This chain is Aldo-keto reductase Mmcs_1938, found in Mycobacterium sp. (strain MCS).